We begin with the raw amino-acid sequence, 191 residues long: Signal peptidase IB (191 aa).

Over 1-7 (MKKEILE) the chain is Cytoplasmic. The helical transmembrane segment at 8–28 (WIISIAVAFVILFIVGKFIVT) threads the bilayer. The Extracellular segment spans residues 29–191 (PYTIKGESMD…HNFNPENTKN (163 aa)). Catalysis depends on residues Ser-36 and Lys-77.

This sequence belongs to the peptidase S26 family.

The protein localises to the cell membrane. The catalysed reaction is Cleavage of hydrophobic, N-terminal signal or leader sequences from secreted and periplasmic proteins.. In terms of biological role, essential for cell viability. The protein is Signal peptidase IB (spsB) of Staphylococcus aureus (strain COL).